Here is a 380-residue protein sequence, read N- to C-terminus: Cytochrome b (380 aa).

A run of 4 helical transmembrane segments spans residues 33–53 (FGSL…FLAM), 77–98 (WLIR…FIHV), 113–133 (WNIG…GYVL), and 178–198 (FFAF…VHLL). The heme b site is built by His83 and His97. Residues His182 and His196 each contribute to the heme b site. His201 lines the a ubiquinone pocket. Transmembrane regions (helical) follow at residues 226–246 (IKDI…VLFF), 288–308 (LGGV…PLIN), 320–340 (ITQA…WIGG), and 347–367 (FTMI…MFMF).

Belongs to the cytochrome b family. In terms of assembly, the cytochrome bc1 complex contains 11 subunits: 3 respiratory subunits (MT-CYB, CYC1 and UQCRFS1), 2 core proteins (UQCRC1 and UQCRC2) and 6 low-molecular weight proteins (UQCRH/QCR6, UQCRB/QCR7, UQCRQ/QCR8, UQCR10/QCR9, UQCR11/QCR10 and a cleavage product of UQCRFS1). This cytochrome bc1 complex then forms a dimer. Requires heme b as cofactor.

Its subcellular location is the mitochondrion inner membrane. Functionally, component of the ubiquinol-cytochrome c reductase complex (complex III or cytochrome b-c1 complex) that is part of the mitochondrial respiratory chain. The b-c1 complex mediates electron transfer from ubiquinol to cytochrome c. Contributes to the generation of a proton gradient across the mitochondrial membrane that is then used for ATP synthesis. The sequence is that of Cytochrome b (MT-CYB) from Calomys musculinus (Drylands vesper mouse).